The following is a 203-amino-acid chain: ATP-dependent Clp protease proteolytic subunit 2 (203 aa).

Ser-97 serves as the catalytic Nucleophile. The active site involves His-122.

This sequence belongs to the peptidase S14 family. As to quaternary structure, fourteen ClpP subunits assemble into 2 heptameric rings which stack back to back to give a disk-like structure with a central cavity, resembling the structure of eukaryotic proteasomes.

The protein resides in the cytoplasm. It carries out the reaction Hydrolysis of proteins to small peptides in the presence of ATP and magnesium. alpha-casein is the usual test substrate. In the absence of ATP, only oligopeptides shorter than five residues are hydrolyzed (such as succinyl-Leu-Tyr-|-NHMec, and Leu-Tyr-Leu-|-Tyr-Trp, in which cleavage of the -Tyr-|-Leu- and -Tyr-|-Trp bonds also occurs).. Functionally, cleaves peptides in various proteins in a process that requires ATP hydrolysis. Has a chymotrypsin-like activity. Plays a major role in the degradation of misfolded proteins. The sequence is that of ATP-dependent Clp protease proteolytic subunit 2 from Myxococcus xanthus (strain DK1622).